The primary structure comprises 167 residues: Ubiquitin-fold modifier-conjugating enzyme 1 (167 aa).

Cysteine 116 acts as the Glycyl thioester intermediate in catalysis.

It belongs to the ubiquitin-conjugating enzyme family. UFC1 subfamily. As to quaternary structure, interacts with UBA5 (via C-terminus). Interacts with UFL1. Interacts with UFM1.

In terms of biological role, E2-like enzyme which specifically catalyzes the second step in ufmylation. Accepts the ubiquitin-like modifier UFM1 from the E1 enzyme UBA5 and forms an intermediate with UFM1 via a thioester linkage. Ufmylation is involved in various processes, such as ribosome recycling, response to DNA damage, interferon response or reticulophagy (also called ER-phagy). The sequence is that of Ubiquitin-fold modifier-conjugating enzyme 1 from Esox lucius (Northern pike).